The primary structure comprises 426 residues: LIM/homeobox protein Lhx2 (426 aa).

Positions 14 to 24 (VIDEMDRRQER) are enriched in basic and acidic residues. The interval 14–42 (VIDEMDRRQERGSGISSAIDRGDTETTMP) is disordered. LIM zinc-binding domains follow at residues 52-104 (CAGC…CKED) and 114-167 (CARC…CRLH). Residues 248-268 (DAEHLDRDQPYPSSQKTKRMR) are disordered. Residues 264–323 (TKRMRTSFKHHQLRTMKSYFAINHNPDAKDLKQLAQKTGLTKRVLQVWFQNARAKFRRNL) constitute a DNA-binding region (homeobox). The Nuclear localization signal signature appears at 305-321 (KRVLQVWFQNARAKFRR). The segment covering 326–354 (QENTGVDKTSDATLQTGTPSGPASELSNA) has biased composition (polar residues). The segment at 326 to 370 (QENTGVDKTSDATLQTGTPSGPASELSNASLSPSSTPTTLTDLTS) is disordered. Over residues 355–370 (SLSPSSTPTTLTDLTS) the composition is skewed to low complexity.

In terms of assembly, interacts (via LIM domains) with CITED2. Interacts with POU4F2. In terms of tissue distribution, found in discrete regions of the developing CNS, primarily in diencephalic and telencephalic structures and a subset of lymphoid tissues. Also found in embryonic spinal cord and fetal liver.

Its subcellular location is the nucleus. Acts as a transcriptional activator. Stimulates the promoter of the alpha-glycoprotein gene. Transcriptional regulatory protein involved in the control of cell differentiation in developing lymphoid and neural cell types. This chain is LIM/homeobox protein Lhx2 (Lhx2), found in Rattus norvegicus (Rat).